We begin with the raw amino-acid sequence, 227 residues long: 27 kDa glycoprotein (227 aa).

An N-terminal signal peptide occupies residues 1 to 17; that stretch reads MMWKTVLITIFAAGVLA. N-linked (GlcNAc...) asparagine glycosylation is found at N118 and N173.

This sequence belongs to the UPF0408 family. In terms of tissue distribution, expressed in the subesophageal body, fat bodies, hemocytes, midgut and Malpighian tubules. Not expressed in silk glands.

It is found in the secreted. This is 27 kDa glycoprotein from Bombyx mori (Silk moth).